Reading from the N-terminus, the 192-residue chain is UPF0149 protein VP2588 (192 aa).

This sequence belongs to the UPF0149 family.

This chain is UPF0149 protein VP2588, found in Vibrio parahaemolyticus serotype O3:K6 (strain RIMD 2210633).